A 323-amino-acid chain; its full sequence is UDP-glucuronate 4-epimerase (323 aa).

11–13 (GFI) lines the NAD(+) pocket. Tyr-152 acts as the Proton acceptor in catalysis. Lys-156 lines the NAD(+) pocket.

The protein belongs to the NAD(P)-dependent epimerase/dehydratase family. NAD(+) is required as a cofactor.

The catalysed reaction is UDP-alpha-D-glucuronate = UDP-alpha-D-galacturonate. Functionally, catalyzes the interconversion of UDP-D-glucuronic acid (UDP-GlcA) and UDP-D-galacturonic acid (UDP-GalA). The sequence is that of UDP-glucuronate 4-epimerase from Thermodesulfobacterium geofontis (strain OPF15).